We begin with the raw amino-acid sequence, 100 residues long: RxLR effector protein PITG_18683 (100 aa).

The first 22 residues, 1 to 22 (MRSFLYGILAFAVLARSSAVAA), serve as a signal peptide directing secretion. The RxLR-dEER motif lies at 43–57 (RSLRVEAQEVIQSGR). The short motif at 78–82 (KPDIK) is the Calmodulin-binding motif element.

This sequence belongs to the RxLR effector family. In terms of assembly, interacts with the host calmodulin.

It is found in the secreted. It localises to the host cell. In terms of biological role, secreted effector that associates with calmodulin to interfere with plant defense-associated calcium signaling in hosts. The chain is RxLR effector protein PITG_18683 from Phytophthora infestans (strain T30-4) (Potato late blight agent).